We begin with the raw amino-acid sequence, 460 residues long: Amino acid transporter AVT6A (460 aa).

11 helical membrane passes run 45-65, 66-86, 120-140, 172-192, 199-219, 238-258, 281-301, 336-356, 371-391, 394-414, and 427-447; these read FSGAVFNLATTIIGAGIMALP, ATMKILGLGLGITMIVVMAFL, ILLQVAVLVNNIGVLIVYMII, AAILLITTLGVFAPLACFKRI, SALSVALAVVFLIITAGISIM, LTSFWNLFTVVPVLVTAFICH, ALMLCSSVYIMTSIFGFLLFG, LMLVFPIVFYPLRINIDGLLF, CLTAGLISVIFLGANFIPSIW, FQFTGATAAVCLGFIFPASII, and TTLAIFMIVLAVLSNAIAIYS.

The protein belongs to the amino acid/polyamine transporter 2 family. Amino acid/auxin permease (AAAP) (TC 2.A.18.6) subfamily.

It localises to the membrane. The sequence is that of Amino acid transporter AVT6A from Arabidopsis thaliana (Mouse-ear cress).